We begin with the raw amino-acid sequence, 534 residues long: MFS transporter fmqE (534 aa).

12 consecutive transmembrane segments (helical) span residues 48-68, 109-129, 136-156, 169-189, 194-214, 228-248, 326-346, 349-369, 379-399, 407-427, 447-467, and 478-498; these read LLLFAAYRVTHLAILPFVCAS, LWTSMTNLGQALGSLIAGFLA, WTAVSLAILSIVGTFILVFSS, GAVVGGLMAIGTTYAADVAPI, ALLQAIVFFGVAMQGVSLGIV, IVFGIQWAFATLVLIAAFLVP, AIGVPFLTQNIYFLITVGLNV, VFDIGIGGFFLGCLFVMLGWL, LWLWGLIGNFLCMVTIGALGF, LAIAVIMNVLISYGVYATVGV, VAFIVGAVGGWLFNFITPYMY, and TGFVYAGLTVVVAVISWFLVP.

It belongs to the major facilitator superfamily. Sugar transporter (TC 2.A.1.1) family.

It is found in the cytoplasmic vesicle membrane. Its function is as follows. MFS transporter; part of the gene cluster that mediates the biosynthesis of the antitumor cytotoxic peptidyl alkaloids fumiquinazolines that confer a dual-usage capability to defend against phagocytes in the environment and animal hosts. Probably involved in fumiquinazolines metabolism and transport. This is MFS transporter fmqE from Aspergillus fumigatus (strain ATCC MYA-4609 / CBS 101355 / FGSC A1100 / Af293) (Neosartorya fumigata).